We begin with the raw amino-acid sequence, 457 residues long: Argininosuccinate lyase (457 aa).

The protein belongs to the lyase 1 family. Argininosuccinate lyase subfamily.

The protein localises to the cytoplasm. The enzyme catalyses 2-(N(omega)-L-arginino)succinate = fumarate + L-arginine. Its pathway is amino-acid biosynthesis; L-arginine biosynthesis; L-arginine from L-ornithine and carbamoyl phosphate: step 3/3. The protein is Argininosuccinate lyase of Shigella dysenteriae serotype 1 (strain Sd197).